The following is a 251-amino-acid chain: Elongation factor Ts (251 aa).

The interval 82–85 (TDFV) is involved in Mg(2+) ion dislocation from EF-Tu. Residues 215-251 (QMGQKAPEPVAAAPQVEEKAPEPAAKDNPPAKGKKKK) form a disordered region. Low complexity predominate over residues 219–229 (KAPEPVAAAPQ). Residues 230 to 239 (VEEKAPEPAA) show a composition bias toward basic and acidic residues.

This sequence belongs to the EF-Ts family.

It is found in the cytoplasm. Functionally, associates with the EF-Tu.GDP complex and induces the exchange of GDP to GTP. It remains bound to the aminoacyl-tRNA.EF-Tu.GTP complex up to the GTP hydrolysis stage on the ribosome. This is Elongation factor Ts from Microcystis aeruginosa (strain NIES-843 / IAM M-2473).